We begin with the raw amino-acid sequence, 37 residues long: SCNTATCVTHRLAGLLSRSGGVVKSNFVPTNVGSQAF.

C2 and C7 are oxidised to a cystine. Phenylalanine amide is present on F37.

It belongs to the calcitonin family.

It localises to the secreted. Its function is as follows. CGRP1/CALCA is a peptide hormone that induces vasodilation mediated by the CALCRL-RAMP1 receptor complex. Dilates a variety of vessels including the coronary, cerebral and systemic vasculature. Its abundance in the CNS also points toward a neurotransmitter or neuromodulator role. It also elevates platelet cAMP. CGRP1 can also bind and activate CALCR-RAMP1 (AMYR1) receptor complex. The sequence is that of Calcitonin gene-related peptide 1 (CALCA) from Ovis aries (Sheep).